A 121-amino-acid chain; its full sequence is NAD(P)H-quinone oxidoreductase subunit M (121 aa).

The protein belongs to the complex I NdhM subunit family. As to quaternary structure, NDH-1 can be composed of about 15 different subunits; different subcomplexes with different compositions have been identified which probably have different functions.

The protein localises to the cellular thylakoid membrane. The enzyme catalyses a plastoquinone + NADH + (n+1) H(+)(in) = a plastoquinol + NAD(+) + n H(+)(out). The catalysed reaction is a plastoquinone + NADPH + (n+1) H(+)(in) = a plastoquinol + NADP(+) + n H(+)(out). In terms of biological role, NDH-1 shuttles electrons from an unknown electron donor, via FMN and iron-sulfur (Fe-S) centers, to quinones in the respiratory and/or the photosynthetic chain. The immediate electron acceptor for the enzyme in this species is believed to be plastoquinone. Couples the redox reaction to proton translocation, and thus conserves the redox energy in a proton gradient. Cyanobacterial NDH-1 also plays a role in inorganic carbon-concentration. This Synechococcus sp. (strain JA-3-3Ab) (Cyanobacteria bacterium Yellowstone A-Prime) protein is NAD(P)H-quinone oxidoreductase subunit M.